Consider the following 248-residue polypeptide: MDMTGTISAPLYLLRGLQLIGWRDMPHALDYLFADGALREGTLVAINAEKMLAVEDNPEVRALIEAAEFKYADGISVVRSLRKKYPQAQVSRVAGADLWEALMQRAGAEGTPVFLVGGKPEVLAQTESRLRQRWQVNIVGSQDGYFTPEQRQALFERIRDSGAKIVTVAMGSPRQEIFMRDCRRLYPHALYMGVGGTYDVFTGHVHRAPKFWQDLGLEWFYRLLLQPSRIKRQFRLLRYLRWHYSGKL.

This sequence belongs to the glycosyltransferase 26 family.

It catalyses the reaction UDP-N-acetyl-alpha-D-mannosaminouronate + N-acetyl-alpha-D-glucosaminyl-di-trans,octa-cis-undecaprenyl diphosphate = beta-D-ManNAcA-(1-&gt;4)-alpha-D-GlcNAc-di-trans,octa-cis-undecaprenyl diphosphate + UDP + H(+). It functions in the pathway bacterial outer membrane biogenesis; enterobacterial common antigen biosynthesis. Catalyzes the synthesis of Und-PP-GlcNAc-ManNAcA (Lipid II), the second lipid-linked intermediate involved in enterobacterial common antigen (ECA) synthesis. This chain is UDP-N-acetyl-D-mannosaminuronic acid transferase, found in Klebsiella pneumoniae subsp. pneumoniae (strain ATCC 700721 / MGH 78578).